A 116-amino-acid polypeptide reads, in one-letter code: uncharacterized protein (116 aa).

This is an uncharacterized protein from Acidianus filamentous virus 1 (isolate United States/Yellowstone) (AFV-1).